The primary structure comprises 161 residues: Troponin C, slow skeletal and cardiac muscles (161 aa).

Methionine 1 is subject to N-acetylmethionine. EF-hand domains are found at residues 16–51 (QKNE…LGQN), 52–87 (PTPE…CMKD), 92–127 (KSEE…TGET), and 128–161 (ITED…KGVE). Aspartate 65, aspartate 67, serine 69, threonine 71, and glutamate 76 together coordinate Ca(2+). Serine 98 carries the phosphoserine modification. Aspartate 105, asparagine 107, aspartate 109, tyrosine 111, glutamate 116, aspartate 141, asparagine 143, aspartate 145, arginine 147, and glutamate 152 together coordinate Ca(2+).

Belongs to the troponin C family.

Functionally, troponin is the central regulatory protein of striated muscle contraction. Tn consists of three components: Tn-I which is the inhibitor of actomyosin ATPase, Tn-T which contains the binding site for tropomyosin and Tn-C. The binding of calcium to Tn-C abolishes the inhibitory action of Tn on actin filaments. This Bos taurus (Bovine) protein is Troponin C, slow skeletal and cardiac muscles (TNNC1).